A 167-amino-acid chain; its full sequence is uncharacterized protein (167 aa).

Residues 148–167 are disordered; the sequence is NKESRGENDGGEERESANIY.

This is an uncharacterized protein from Homo sapiens (Human).